The following is a 248-amino-acid chain: Glutaredoxin domain-containing cysteine-rich protein 2 (248 aa).

Composition is skewed to basic and acidic residues over residues 1–16 (MEDP…DGKP) and 157–172 (LMNK…QHDR). Disordered regions lie at residues 1–20 (MEDP…RKVR) and 150–172 (EEAE…QHDR).

Belongs to the GRXCR2 family. Interacts with TPRN; the interaction restricts TPRN to the stereocilum basal region.

Its subcellular location is the cell projection. It is found in the stereocilium. In terms of biological role, required for hearing. Plays a role in maintaining cochlear stereocilia bundles that are involved in sound detection. Ensures the restriction of TPRN to the basal region of stereocilia in hair cells. The protein is Glutaredoxin domain-containing cysteine-rich protein 2 (GRXCR2) of Homo sapiens (Human).